The following is a 277-amino-acid chain: Alternative cytochrome c oxidase subunit 2 (277 aa).

Residues Met-1–Asn-40 are Periplasmic-facing. The chain crosses the membrane as a helical span at residues Ile-41–Val-61. Over Phe-62–Trp-83 the chain is Cytoplasmic. A helical membrane pass occupies residues Trp-84–Trp-104. Residues His-105–Asp-277 are Periplasmic-facing. Positions 190, 225, 229, and 233 each coordinate Cu cation.

This sequence belongs to the cytochrome c oxidase subunit 2 family.

It localises to the cell membrane. The catalysed reaction is 4 Fe(II)-[cytochrome c] + O2 + 8 H(+)(in) = 4 Fe(III)-[cytochrome c] + 2 H2O + 4 H(+)(out). Its function is as follows. Cytochrome c oxidase is the component of the respiratory chain that catalyzes the reduction of oxygen to water. Subunits 1-3 form the functional core of the enzyme complex. Subunit 2 transfers the electrons from cytochrome c via its binuclear copper A center to the bimetallic center of the catalytic subunit 1. The chain is Alternative cytochrome c oxidase subunit 2 (coxM) from Bradyrhizobium diazoefficiens (strain JCM 10833 / BCRC 13528 / IAM 13628 / NBRC 14792 / USDA 110).